The chain runs to 230 residues: 3-isopropylmalate dehydratase small subunit (230 aa).

The protein belongs to the LeuD family. LeuD type 1 subfamily. In terms of assembly, heterodimer of LeuC and LeuD.

It catalyses the reaction (2R,3S)-3-isopropylmalate = (2S)-2-isopropylmalate. The protein operates within amino-acid biosynthesis; L-leucine biosynthesis; L-leucine from 3-methyl-2-oxobutanoate: step 2/4. Catalyzes the isomerization between 2-isopropylmalate and 3-isopropylmalate, via the formation of 2-isopropylmaleate. The protein is 3-isopropylmalate dehydratase small subunit of Bifidobacterium longum (strain DJO10A).